The chain runs to 218 residues: Trimethylamine corrinoid protein 2 (218 aa).

Residues Met1 to Lys92 form the B12-binding N-terminal domain. In terms of domain architecture, B12-binding spans Leu94–Gly218. His107 provides a ligand contact to methylcob(III)alamin.

It belongs to the methylamine corrinoid protein family. In terms of assembly, can form a complex with MttB.

Its pathway is one-carbon metabolism; methanogenesis from trimethylamine. Functionally, acts probably as a methyl group carrier between MttB and either MtbA or MtaA. In Methanosarcina mazei (strain ATCC BAA-159 / DSM 3647 / Goe1 / Go1 / JCM 11833 / OCM 88) (Methanosarcina frisia), this protein is Trimethylamine corrinoid protein 2 (mttC2).